A 288-amino-acid polypeptide reads, in one-letter code: Glucose-1-phosphate thymidylyltransferase (288 aa).

Gly8 serves as a coordination point for dTDP-alpha-D-glucose. DTTP contacts are provided by Gly8, Gly11, Thr12, Arg13, Lys23, Gln24, Gln80, Gly85, and Asp108. Residues Lys23, Gln24, Gln80, Gly85, Asp108, Asn109, Gly143, Glu158, Lys159, Val169, and Asp222 each coordinate dTDP-alpha-D-glucose. Asp108 contributes to the Mg(2+) binding site. A Mg(2+)-binding site is contributed by Asp222.

The protein belongs to the glucose-1-phosphate thymidylyltransferase family. It depends on Mg(2+) as a cofactor.

The catalysed reaction is dTTP + alpha-D-glucose 1-phosphate + H(+) = dTDP-alpha-D-glucose + diphosphate. The protein operates within carbohydrate biosynthesis; dTDP-L-rhamnose biosynthesis. Functionally, catalyzes the conversion of glucose-1-phosphate and dTTP to dTDP-glucose and pyrophosphate. Involved in the biosynthesis of the dTDP-L-rhamnose which is a component of the critical linker, D-N-acetylglucosamine-L-rhamnose disaccharide, which connects the galactan region of arabinogalactan to peptidoglycan via a phosphodiester linkage. This Mycolicibacterium smegmatis (strain ATCC 700084 / mc(2)155) (Mycobacterium smegmatis) protein is Glucose-1-phosphate thymidylyltransferase (rmlA).